The chain runs to 505 residues: Glycerol kinase (505 aa).

Position 12 (T12) interacts with ADP. Residues T12, T13, and S14 each coordinate ATP. T12 lines the sn-glycerol 3-phosphate pocket. R16 lines the ADP pocket. Sn-glycerol 3-phosphate is bound by residues R82, E83, Y134, and D249. The glycerol site is built by R82, E83, Y134, D249, and Q250. 2 residues coordinate ADP: T271 and G315. T271, G315, Q319, and G416 together coordinate ATP. Positions 416 and 420 each coordinate ADP.

It belongs to the FGGY kinase family.

The enzyme catalyses glycerol + ATP = sn-glycerol 3-phosphate + ADP + H(+). Its pathway is polyol metabolism; glycerol degradation via glycerol kinase pathway; sn-glycerol 3-phosphate from glycerol: step 1/1. Inhibited by fructose 1,6-bisphosphate (FBP). Its function is as follows. Key enzyme in the regulation of glycerol uptake and metabolism. Catalyzes the phosphorylation of glycerol to yield sn-glycerol 3-phosphate. This Mycolicibacterium vanbaalenii (strain DSM 7251 / JCM 13017 / BCRC 16820 / KCTC 9966 / NRRL B-24157 / PYR-1) (Mycobacterium vanbaalenii) protein is Glycerol kinase.